Consider the following 61-residue polypeptide: uncharacterized protein (61 aa).

This is an uncharacterized protein from Acidianus convivator (ABV).